The primary structure comprises 386 residues: Patatin group M-1 (386 aa).

A signal peptide spans methionine 1–alanine 23. The region spanning leucine 32–leucine 229 is the PNPLA domain. The GXGXXG motif lies at glycine 36–glycine 41. The GXSXG motif lies at glycine 75–glycine 79. Serine 77 (nucleophile) is an active-site residue. The N-linked (GlcNAc...) asparagine glycan is linked to asparagine 115. Aspartate 215 acts as the Proton acceptor in catalysis. The DGA/G motif lies at aspartate 215–glycine 217.

The protein belongs to the patatin family. As to expression, tuber.

The protein localises to the vacuole. Its function is as follows. Probable lipolytic acyl hydrolase (LAH), an activity which is thought to be involved in the response of tubers to pathogens. This is Patatin group M-1 from Solanum tuberosum (Potato).